A 343-amino-acid chain; its full sequence is N(4)-bis(aminopropyl)spermidine synthase (343 aa).

This sequence belongs to the branched-chain polyamine synthase family.

The protein localises to the cytoplasm. The catalysed reaction is 2 S-adenosyl 3-(methylsulfanyl)propylamine + spermidine = N(4)-bis(aminopropyl)spermidine + 2 S-methyl-5'-thioadenosine + 2 H(+). It functions in the pathway amine and polyamine biosynthesis. In terms of biological role, involved in the biosynthesis of branched-chain polyamines, which support the growth of thermophiles under high-temperature conditions. Catalyzes the sequential condensation of spermidine with the aminopropyl groups of decarboxylated S-adenosylmethionines to produce N(4)-bis(aminopropyl)spermidine via N(4)-aminopropylspermidine. This is N(4)-bis(aminopropyl)spermidine synthase from Thermus thermophilus.